Here is a 469-residue protein sequence, read N- to C-terminus: UDP-N-acetylmuramate--L-alanine ligase (469 aa).

An ATP-binding site is contributed by 112–118; sequence GTHGKTT.

This sequence belongs to the MurCDEF family.

The protein resides in the cytoplasm. It carries out the reaction UDP-N-acetyl-alpha-D-muramate + L-alanine + ATP = UDP-N-acetyl-alpha-D-muramoyl-L-alanine + ADP + phosphate + H(+). The protein operates within cell wall biogenesis; peptidoglycan biosynthesis. Functionally, cell wall formation. The chain is UDP-N-acetylmuramate--L-alanine ligase from Methylibium petroleiphilum (strain ATCC BAA-1232 / LMG 22953 / PM1).